The sequence spans 201 residues: Recombination protein RecR (201 aa).

The C4-type zinc finger occupies 60 to 75 (CQICGNIDTRDPCTIC). The Toprim domain occupies 83 to 178 (TLLVVVETVA…KITRLAHGVP (96 aa)).

It belongs to the RecR family.

In terms of biological role, may play a role in DNA repair. It seems to be involved in an RecBC-independent recombinational process of DNA repair. It may act with RecF and RecO. The chain is Recombination protein RecR from Beijerinckia indica subsp. indica (strain ATCC 9039 / DSM 1715 / NCIMB 8712).